The sequence spans 143 residues: Large ribosomal subunit protein uL11 (143 aa).

It belongs to the universal ribosomal protein uL11 family. As to quaternary structure, part of the ribosomal stalk of the 50S ribosomal subunit. Interacts with L10 and the large rRNA to form the base of the stalk. L10 forms an elongated spine to which L12 dimers bind in a sequential fashion forming a multimeric L10(L12)X complex. In terms of processing, one or more lysine residues are methylated.

Functionally, forms part of the ribosomal stalk which helps the ribosome interact with GTP-bound translation factors. This Aromatoleum aromaticum (strain DSM 19018 / LMG 30748 / EbN1) (Azoarcus sp. (strain EbN1)) protein is Large ribosomal subunit protein uL11.